The chain runs to 1128 residues: Testis-expressed protein 2 (1128 aa).

3 disordered regions span residues 1-28 (MTSL…VQRS), 71-99 (AKED…GLSV), and 130-279 (PLAL…FFKV). Positions 130–186 (PLALSPGSSSSGPLASSPSVSSLSEQKTSSSSPLSSPSKSPVLSSSASSSALSSAKP) are enriched in low complexity. A Phosphoserine modification is found at serine 195. Polar residues predominate over residues 248 to 274 (QFTQPRNTGGDSKTAPSSPLTSPSDTR). Residue threonine 261 is modified to Phosphothreonine. Serine 264, serine 265, serine 269, and serine 294 each carry phosphoserine. Residues 345-387 (KEEEGDSEGEGYGSDSNTSRSDHLKPTEDASKEVEPKGSQASS) form a disordered region. A compositionally biased stretch (basic and acidic residues) spans 364 to 380 (RSDHLKPTEDASKEVEP). 2 helical membrane-spanning segments follow: residues 473–493 (TLGF…PYYM) and 495–515 (GLFL…WFFT). A glycan (N-linked (GlcNAc...) asparagine) is linked at asparagine 593. Positions 645-671 (SKAQSDKEATEEKPPPEKELPSEDLKK) are enriched in basic and acidic residues. 4 disordered regions span residues 645 to 688 (SKAQ…DPIL), 716 to 765 (RKPA…QKEL), 787 to 821 (QDNR…EEEQ), and 945 to 981 (ADSD…GYVG). Serine 733, serine 739, serine 745, serine 749, serine 752, serine 799, and serine 816 each carry phosphoserine. Residues 736-751 (SSPSGHLSHSRSSSKG) are compositionally biased toward low complexity. A compositionally biased stretch (polar residues) spans 796–806 (PVQSAESSPTA). An SMP-LTD domain is found at 817–1102 (EEEEQEAWVN…MPNMDDVYIP (286 aa)). Residues 946–963 (DSDEESSSAGSSEEDDPP) show a composition bias toward acidic residues.

It localises to the endoplasmic reticulum membrane. It is found in the nucleus membrane. During endoplasmic reticulum (ER) stress or when cellular ceramide levels increase, may induce contacts between the ER and medial-Golgi complex to facilitate non-vesicular transport of ceramides from the ER to the Golgi complex where they are converted to complex sphingolipids, preventing toxic ceramide accumulation. In Mus musculus (Mouse), this protein is Testis-expressed protein 2 (Tex2).